Here is a 202-residue protein sequence, read N- to C-terminus: Outer-membrane lipoprotein LolB (202 aa).

The signal sequence occupies residues 1–24 (MESKEQHLIRQYFILAMFFLFLAG). A lipid anchor (N-palmitoyl cysteine) is attached at cysteine 25. Cysteine 25 carries the S-diacylglycerol cysteine lipid modification.

This sequence belongs to the LolB family. As to quaternary structure, monomer.

Its subcellular location is the cell outer membrane. In terms of biological role, plays a critical role in the incorporation of lipoproteins in the outer membrane after they are released by the LolA protein. The chain is Outer-membrane lipoprotein LolB from Pseudoalteromonas translucida (strain TAC 125).